We begin with the raw amino-acid sequence, 104 residues long: Large ribosomal subunit protein uL24 (104 aa).

The protein belongs to the universal ribosomal protein uL24 family. Part of the 50S ribosomal subunit.

Its function is as follows. One of two assembly initiator proteins, it binds directly to the 5'-end of the 23S rRNA, where it nucleates assembly of the 50S subunit. One of the proteins that surrounds the polypeptide exit tunnel on the outside of the subunit. In Cronobacter sakazakii (strain ATCC BAA-894) (Enterobacter sakazakii), this protein is Large ribosomal subunit protein uL24.